Here is a 412-residue protein sequence, read N- to C-terminus: Branched-chain alpha-ketoacid dehydrogenase kinase (412 aa).

The N-terminal 30 residues, 1–30 (MILASVLGSGPRGGPPLRPLLGPALSLRAR), are a transit peptide targeting the mitochondrion. Serine 31 bears the Phosphoserine mark. Serine 52 carries the phosphoserine; by autocatalysis modification. In terms of domain architecture, Histidine kinase spans 159 to 404 (LDDHKDVVTL…DVYLRLRHID (246 aa)). 2 positions are modified to N6-acetyllysine: lysine 192 and lysine 233. Residues asparagine 279 and aspartate 315 each contribute to the ATP site. Asparagine 279 serves as a coordination point for Mg(2+). Positions 328, 330, and 333 each coordinate K(+). Residues threonine 334 and threonine 335 each contribute to the ATP site. 2 positions are modified to phosphoserine: serine 356 and serine 360. ATP is bound by residues histidine 364, glycine 367, and leucine 370. Glycine 367 lines the K(+) pocket.

It belongs to the PDK/BCKDK protein kinase family. As to quaternary structure, homodimer. Homotetramer. Dimerizes through interaction of two opposing nucleotide-binding domains. Interacts with E2 component of the branched-chain alpha-ketoacid dehydrogenase (BCKDH) complex. Competes with BCKDK for binding to the E2 component; this interaction is modulated by branched-chain alpha-keto acids. At steady state, BCKDH holoenzyme contains BCKDK and BCKDHA is phosphorylated. In response to high levels of branched-chain alpha-keto acids, the inhibitory BCKDK is replaced by activating PPM1K leading to BCKDHA dephosphorylation and BCAA degradation. In terms of processing, autophosphorylated.

Its subcellular location is the mitochondrion matrix. It localises to the mitochondrion. It carries out the reaction L-seryl-[3-methyl-2-oxobutanoate dehydrogenase] + ATP = O-phospho-L-seryl-[3-methyl-2-oxobutanoate dehydrogenase] + ADP + H(+). The enzyme catalyses L-seryl-[protein] + ATP = O-phospho-L-seryl-[protein] + ADP + H(+). Serine/threonine-protein kinase component of macronutrients metabolism. Forms a functional kinase and phosphatase pair with PPM1K, serving as a metabolic regulatory node that coordinates branched-chain amino acids (BCAAs) with glucose and lipid metabolism via two distinct phosphoprotein targets: mitochondrial BCKDHA subunit of the branched-chain alpha-ketoacid dehydrogenase (BCKDH) complex and cytosolic ACLY, a lipogenic enzyme of Krebs cycle. Phosphorylates and inactivates mitochondrial BCKDH complex a multisubunit complex consisting of three multimeric components each involved in different steps of BCAA catabolism: E1 composed of BCKDHA and BCKDHB, E2 core composed of DBT monomers, and E3 composed of DLD monomers. Associates with the E2 component of BCKDH complex and phosphorylates BCKDHA on Ser-347, leading to conformational changes that interrupt substrate channeling between E1 and E2 and inactivates the BCKDH complex. Phosphorylates ACLY on Ser-455 in response to changes in cellular carbohydrate abundance such as occurs during fasting to feeding metabolic transition. Refeeding stimulates MLXIPL/ChREBP transcription factor, leading to increased BCKDK to PPM1K expression ratio, phosphorylation and activation of ACLY that ultimately results in the generation of malonyl-CoA and oxaloacetate immediate substrates of de novo lipogenesis and glucogenesis, respectively. Recognizes phosphosites having SxxE/D canonical motif. The protein is Branched-chain alpha-ketoacid dehydrogenase kinase (BCKDK) of Bos taurus (Bovine).